Reading from the N-terminus, the 142-residue chain is MATFKLIVVSAEQHIFNGEVKGIQATGSEGELGILAGHLPLLTAIKPGIIKITLEDDTEEVIYISGGFLEVQPTIVTVLADVAIRGKELDRERILEAKRKAEQNIVSGAKDANYEMLVSKLSRELAKLRAYELTDRLTQRKR.

Belongs to the ATPase epsilon chain family. In terms of assembly, F-type ATPases have 2 components, CF(1) - the catalytic core - and CF(0) - the membrane proton channel. CF(1) has five subunits: alpha(3), beta(3), gamma(1), delta(1), epsilon(1). CF(0) has three main subunits: a, b and c.

The protein resides in the cell inner membrane. In terms of biological role, produces ATP from ADP in the presence of a proton gradient across the membrane. In Histophilus somni (strain 129Pt) (Haemophilus somnus), this protein is ATP synthase epsilon chain.